A 484-amino-acid polypeptide reads, in one-letter code: Glutamate--tRNA ligase (484 aa).

The 'HIGH' region signature appears at 11–21 (PSPTGYLHIGN). The 'KMSKS' region motif lies at 252 to 256 (KLSKR). Lys255 contributes to the ATP binding site.

Belongs to the class-I aminoacyl-tRNA synthetase family. Glutamate--tRNA ligase type 1 subfamily. As to quaternary structure, monomer.

It localises to the cytoplasm. It catalyses the reaction tRNA(Glu) + L-glutamate + ATP = L-glutamyl-tRNA(Glu) + AMP + diphosphate. Functionally, catalyzes the attachment of glutamate to tRNA(Glu) in a two-step reaction: glutamate is first activated by ATP to form Glu-AMP and then transferred to the acceptor end of tRNA(Glu). In Staphylococcus aureus (strain bovine RF122 / ET3-1), this protein is Glutamate--tRNA ligase.